A 37-amino-acid chain; its full sequence is Large ribosomal subunit protein bL36 (37 aa).

The protein belongs to the bacterial ribosomal protein bL36 family.

This is Large ribosomal subunit protein bL36 from Desulforapulum autotrophicum (strain ATCC 43914 / DSM 3382 / VKM B-1955 / HRM2) (Desulfobacterium autotrophicum).